A 368-amino-acid chain; its full sequence is Phosphate acyltransferase (368 aa).

Belongs to the PlsX family. Homodimer. Probably interacts with PlsY.

The protein localises to the cytoplasm. The enzyme catalyses a fatty acyl-[ACP] + phosphate = an acyl phosphate + holo-[ACP]. The protein operates within lipid metabolism; phospholipid metabolism. In terms of biological role, catalyzes the reversible formation of acyl-phosphate (acyl-PO(4)) from acyl-[acyl-carrier-protein] (acyl-ACP). This enzyme utilizes acyl-ACP as fatty acyl donor, but not acyl-CoA. This is Phosphate acyltransferase from Cereibacter sphaeroides (strain ATCC 17025 / ATH 2.4.3) (Rhodobacter sphaeroides).